Reading from the N-terminus, the 376-residue chain is Protein FAM199X (376 aa).

Residues 237–253 show a composition bias toward basic and acidic residues; that stretch reads YIKEHSPRQRSTRESWK. Positions 237 to 350 are disordered; it reads YIKEHSPRQR…QRQARKERLS (114 aa). Residues 255–300 show a composition bias toward low complexity; sequence TSYSTASTSGVSGASVSSSSASMVSTASSTGSSGGNSASNSSANMS. Basic residues predominate over residues 318–337; the sequence is DSKKRSKQRKLQQKALRKRQ. The stretch at 320–349 forms a coiled coil; sequence KKRSKQRKLQQKALRKRQLKEQRQARKERL. The segment covering 338–349 has biased composition (basic and acidic residues); the sequence is LKEQRQARKERL.

It belongs to the FAM199 family.

This chain is Protein FAM199X (fam199x), found in Xenopus tropicalis (Western clawed frog).